We begin with the raw amino-acid sequence, 1194 residues long: ATP-dependent RNA helicase DHX30 (1194 aa).

Basic and acidic residues predominate over residues M1–D10. Residues M1–P27 form a disordered region. At S6 the chain carries Phosphoserine. The 69-residue stretch at P53–F121 folds into the DRBM domain. The disordered stretch occupies residues A150–E199. Over residues E188–E199 the composition is skewed to acidic residues. Residues S226 and S380 each carry the phosphoserine modification. Residues L444–P612 enclose the Helicase ATP-binding domain. Residue G457 to T464 participates in ATP binding. Positions D559 to H562 match the DEAH box motif. In terms of domain architecture, Helicase C-terminal spans L654 to M827.

The protein belongs to the DEAD box helicase family. DEAH subfamily. In terms of assembly, identified in a complex with TFAM and SSBP1. Interacts (via N-terminus) with ZC3HAV1 (via N-terminal domain) in an RNA-independent manner. Found in a complex with GRSF1, DDX28, FASTKD2 and FASTKD5.

The protein localises to the cytoplasm. Its subcellular location is the mitochondrion. The protein resides in the mitochondrion matrix. It localises to the mitochondrion nucleoid. It carries out the reaction ATP + H2O = ADP + phosphate + H(+). In terms of biological role, RNA-dependent helicase. Plays an important role in the assembly of the mitochondrial large ribosomal subunit. Required for optimal function of the zinc-finger antiviral protein ZC3HAV1. Associates with mitochondrial DNA. Involved in nervous system development and differentiation through its involvement in the up-regulation of a number of genes which are required for neurogenesis, including GSC, NCAM1, neurogenin, and NEUROD. This Pongo abelii (Sumatran orangutan) protein is ATP-dependent RNA helicase DHX30 (DHX30).